Reading from the N-terminus, the 208-residue chain is Ribosomal RNA large subunit methyltransferase E (208 aa).

S-adenosyl-L-methionine contacts are provided by Gly62, Trp64, Asp82, Asp98, and Asp123. Lys163 (proton acceptor) is an active-site residue.

This sequence belongs to the class I-like SAM-binding methyltransferase superfamily. RNA methyltransferase RlmE family.

It localises to the cytoplasm. The catalysed reaction is uridine(2552) in 23S rRNA + S-adenosyl-L-methionine = 2'-O-methyluridine(2552) in 23S rRNA + S-adenosyl-L-homocysteine + H(+). Specifically methylates the uridine in position 2552 of 23S rRNA at the 2'-O position of the ribose in the fully assembled 50S ribosomal subunit. The sequence is that of Ribosomal RNA large subunit methyltransferase E from Actinobacillus pleuropneumoniae serotype 5b (strain L20).